Reading from the N-terminus, the 742-residue chain is Envelope glycoprotein H (742 aa).

The signal sequence occupies residues 1–23 (MRPGLPSYLIILAVCLFSHLLSS). Over 24–719 (RYGAEAVSEP…VVDATDSRLL (696 aa)) the chain is Virion surface. Asparagine 55, asparagine 62, asparagine 67, and asparagine 192 each carry an N-linked (GlcNAc...) asparagine; by host glycan. A disulfide bridge connects residues cysteine 195 and cysteine 211. Residues 217-280 (YLIDELRYVK…QTEKHELLVL (64 aa)) are interaction with gL. Cystine bridges form between cysteine 330–cysteine 383, cysteine 495–cysteine 522, and cysteine 571–cysteine 624. 2 N-linked (GlcNAc...) asparagine; by host glycosylation sites follow: asparagine 641 and asparagine 700. Residues 720–740 (MMSVYALSAIIGIYLLYRMLK) traverse the membrane as a helical segment. Residues 741-742 (TC) lie on the Intravirion side of the membrane.

It belongs to the herpesviridae glycoprotein H family. In terms of assembly, interacts with glycoprotein L (gL); this interaction is necessary for the correct processing and cell surface expression of gH. The heterodimer gH/gL seems to interact with gB trimers during fusion. Forms the envelope pentamer complex (PC) composed of gH, gL, UL128, UL130, and UL131A. The pentamer interacts with host NRP2. Forms the envelope trimer complex composed of gH, gL, and gO. The trimer interacts with host PDGFRA. The trimer also interacts with host EPHA2. The trimer also interacts with host TGFBR3. Interacts with UL116. In terms of processing, N-glycosylated, O-glycosylated, and sialylated.

Its subcellular location is the virion membrane. The protein localises to the host cell membrane. The protein resides in the host endosome membrane. Functionally, the heterodimer glycoprotein H-glycoprotein L is required for the fusion of viral and plasma membranes leading to virus entry into the host cell. Following initial binding to host receptor, membrane fusion is mediated by the fusion machinery composed of gB and the heterodimer gH/gL. May also be involved in the fusion between the virion envelope and the outer nuclear membrane during virion morphogenesis. In human cytomegalovirus, forms two distincts complexes to mediate viral entry, a trimer and a pentamer at the surface of the virion envelope. The gH-gL-gO trimer is required for infection in fibroblasts by interacting with host PDGFRA, and in glioblastoma cells by interacting with host EPHA2. Thsi trimer may also be required in other cell types using host TGFBR3. The gH-gL-UL128-UL130-UL131A pentamer is essential for viral entry in epithelial, endothelial and myeloid cells via interaction with host NRP2. The chain is Envelope glycoprotein H from Human cytomegalovirus (strain Merlin) (HHV-5).